We begin with the raw amino-acid sequence, 305 residues long: HPr kinase/phosphorylase (305 aa).

Active-site residues include histidine 138 and lysine 159. 153–160 (GESGIGKS) provides a ligand contact to ATP. Mg(2+) is bound at residue serine 160. Aspartate 177 serves as the catalytic Proton acceptor; for phosphorylation activity. Proton donor; for dephosphorylation activity. An important for the catalytic mechanism of both phosphorylation and dephosphorylation region spans residues 201–210 (IEIRGIGILD). Glutamate 202 contributes to the Mg(2+) binding site. Arginine 243 is a catalytic residue. The interval 264-269 (PVRPGR) is important for the catalytic mechanism of dephosphorylation.

The protein belongs to the HPrK/P family. As to quaternary structure, homohexamer. Mg(2+) serves as cofactor.

It carries out the reaction [HPr protein]-L-serine + ATP = [HPr protein]-O-phospho-L-serine + ADP + H(+). It catalyses the reaction [HPr protein]-O-phospho-L-serine + phosphate + H(+) = [HPr protein]-L-serine + diphosphate. Catalyzes the ATP- as well as the pyrophosphate-dependent phosphorylation of a specific serine residue in HPr, a phosphocarrier protein of the phosphoenolpyruvate-dependent sugar phosphotransferase system (PTS). HprK/P also catalyzes the pyrophosphate-producing, inorganic phosphate-dependent dephosphorylation (phosphorolysis) of seryl-phosphorylated HPr (P-Ser-HPr). The two antagonistic activities of HprK/P are regulated by several intracellular metabolites, which change their concentration in response to the absence or presence of rapidly metabolisable carbon sources (glucose, fructose, etc.) in the growth medium. Therefore, by controlling the phosphorylation state of HPr, HPrK/P is a sensor enzyme that plays a major role in the regulation of carbon metabolism and sugar transport: it mediates carbon catabolite repression (CCR), and regulates PTS-catalyzed carbohydrate uptake and inducer exclusion. The polypeptide is HPr kinase/phosphorylase (Caldanaerobacter subterraneus subsp. tengcongensis (strain DSM 15242 / JCM 11007 / NBRC 100824 / MB4) (Thermoanaerobacter tengcongensis)).